Reading from the N-terminus, the 501-residue chain is MLO-like protein 5 (501 aa).

Residues 1–22 (MAGGGGGSTSGEGPRELDQTPT) are Extracellular-facing. The chain crosses the membrane as a helical span at residues 23-43 (WAVSTVCGVIILISIVLELMI). Residues 44-68 (HKIGEVFTERRKKALYEALQKIKNE) lie on the Cytoplasmic side of the membrane. A helical transmembrane segment spans residues 69–89 (LMVLGFISLLLTFGQNYIASL). Topologically, residues 90 to 151 (CVASRYGHAM…ISLNALHQVH (62 aa)) are extracellular. A helical transmembrane segment spans residues 152 to 172 (IFIFFLAVFHVIYSAITMMLG). The Cytoplasmic portion of the chain corresponds to 173-273 (RAKIRGWKVW…IKRSLEDDFK (101 aa)). A helical membrane pass occupies residues 274–294 (VVVGISPELWAFVMLFLLFDV). Position 295 (His-295) is a topological domain, extracellular. Residues 296–316 (GWYVTAVITMIPPLLTLAIGT) traverse the membrane as a helical segment. Topologically, residues 317 to 359 (KLQAIISDMALEIQERHAVIQGMPLVNVSDRHFWFSRPALVLH) are cytoplasmic. A helical transmembrane segment spans residues 360 to 380 (IIHFILFQNAFEITYFFWIWY). Over 381-391 (EFGLRSCFHHH) the chain is Extracellular. The helical transmembrane segment at 392–412 (FALIIIRVALGVGVQFLCSYI) threads the bilayer. Topologically, residues 413–501 (TLPLYALVTQ…SQSRDLLSGP (89 aa)) are cytoplasmic. Positions 443–501 (WHKNAKKKSETPGQTQPPLPNLRPKTGGDIESASPANITASVDVKESDQSQSRDLLSGP) are disordered. The tract at residues 450–471 (KSETPGQTQPPLPNLRPKTGGD) is calmodulin-binding. Positions 491 to 501 (QSQSRDLLSGP) are enriched in polar residues.

The protein belongs to the MLO family.

Its subcellular location is the membrane. May be involved in modulation of pathogen defense and leaf cell death. Activity seems to be regulated by Ca(2+)-dependent calmodulin binding and seems not to require heterotrimeric G proteins. The chain is MLO-like protein 5 (MLO5) from Arabidopsis thaliana (Mouse-ear cress).